Here is a 149-residue protein sequence, read N- to C-terminus: Aquaporin-like protein 2 (149 aa).

The disordered stretch occupies residues 1 to 35 (MSNESNDLEKNISHLDPTGVDNAYIPPEQPETKHS). Residues 1–47 (MSNESNDLEKNISHLDPTGVDNAYIPPEQPETKHSRFNIDRGTLRNH) lie on the Cytoplasmic side of the membrane. A helical transmembrane segment spans residues 48-68 (FIAAVGEFCGTFMFLWCAYVI). The Extracellular segment spans residues 69-89 (CNVANHDVALTTEPEGSHPGQ). Residues 90–110 (LIMIALGFGFSVMFSIWCFWW) form a helical membrane-spanning segment. The Cytoplasmic segment spans residues 111–149 (GFEPSRFSLFVFGQSHLTSQMCSDVVSSDHCWDGCWWCR).

Belongs to the MIP/aquaporin (TC 1.A.8) family.

The protein resides in the endoplasmic reticulum membrane. The protein localises to the cell membrane. Water channel required to facilitate the transport of water across membranes. Involved in freeze tolerance, osmotolerance and cell flocculation in liquid cultures. Is non-functional in most laboratory strains. The sequence is that of Aquaporin-like protein 2 (AQY2-2) from Saccharomyces cerevisiae (strain Lalvin EC1118 / Prise de mousse) (Baker's yeast).